A 369-amino-acid polypeptide reads, in one-letter code: tRNA/tmRNA (uracil-C(5))-methyltransferase (369 aa).

S-adenosyl-L-methionine contacts are provided by Gln-190, Tyr-218, Asn-223, Glu-239, and Asp-301. Cys-326 (nucleophile) is an active-site residue. The active-site Proton acceptor is the Glu-360.

It belongs to the class I-like SAM-binding methyltransferase superfamily. RNA M5U methyltransferase family. TrmA subfamily.

It carries out the reaction uridine(54) in tRNA + S-adenosyl-L-methionine = 5-methyluridine(54) in tRNA + S-adenosyl-L-homocysteine + H(+). The catalysed reaction is uridine(341) in tmRNA + S-adenosyl-L-methionine = 5-methyluridine(341) in tmRNA + S-adenosyl-L-homocysteine + H(+). Dual-specificity methyltransferase that catalyzes the formation of 5-methyluridine at position 54 (m5U54) in all tRNAs, and that of position 341 (m5U341) in tmRNA (transfer-mRNA). The sequence is that of tRNA/tmRNA (uracil-C(5))-methyltransferase from Vibrio atlanticus (strain LGP32) (Vibrio splendidus (strain Mel32)).